We begin with the raw amino-acid sequence, 660 residues long: Glutenin, high molecular weight subunit 12 (660 aa).

A signal peptide spans 1 to 21; the sequence is MAKRLVLFAAVVIALVALTTA. Over residues 127–136 the composition is skewed to polar residues; sequence YYPSVTSPRQ. Residues 127-660 are disordered; the sequence is YYPSVTSPRQ…EGGDALSASQ (534 aa). Low complexity-rich tracts occupy residues 141–166, 187–200, 208–248, and 255–275; these read PGQA…QGQQ, QGYY…PGQG, QGYY…WQQG, and QQLG…GQQG. Over residues 276–286 the composition is skewed to polar residues; that stretch reads HYPTSLQQPGQ. A compositionally biased stretch (low complexity) spans 296–365; the sequence is QQQPAQGQQG…QQQPGQGQQG (70 aa). Residues 370–384 are compositionally biased toward polar residues; that stretch reads SLQQPGQQGHYPTSL. Low complexity-rich tracts occupy residues 385-426, 478-514, 522-535, and 551-577; these read QQLG…GQQG, PGQR…PGQG, QGYY…PGQG, and QQTG…GQQG. The segment covering 590–604 has biased composition (gly residues); that stretch reads QQSGQGQQSGQGHQP.

The protein belongs to the gliadin/glutenin family. As to quaternary structure, disulfide-bridge linked aggregates.

Its function is as follows. Glutenins are high-molecular weight seed storage proteins of wheat endosperm. Thought to be responsible for the visco-elastic property of wheat dough. The sequence is that of Glutenin, high molecular weight subunit 12 from Triticum aestivum (Wheat).